Here is a 142-residue protein sequence, read N- to C-terminus: MKTFSAKPHEVKRDWYVIDATDKVLGRVASEVAHRLRGKHKPEFTPHVDTGDFIIVINAAKLRVTGAKTTDKKYYRHSGYPGGIYETTFGKMQQRFPGRALEKAVKGMLPKGPLGYAMIKKLKVYAEGSHPHEAQQPKALEI.

It belongs to the universal ribosomal protein uL13 family. In terms of assembly, part of the 50S ribosomal subunit.

This protein is one of the early assembly proteins of the 50S ribosomal subunit, although it is not seen to bind rRNA by itself. It is important during the early stages of 50S assembly. The polypeptide is Large ribosomal subunit protein uL13 (Ralstonia pickettii (strain 12J)).